The primary structure comprises 290 residues: Prepilin leader peptidase/N-methyltransferase (290 aa).

Residues 13–33 form a helical membrane-spanning segment; that stretch reads AFVLCTILLGLLVGSFLNVVV. The Zn(2+) site is built by cysteine 72, cysteine 75, cysteine 97, and cysteine 100. 5 helical membrane passes run 128–148, 158–178, 183–203, 228–248, and 261–276; these read FTWQ…MSLI, VLVL…LFAS, LFGA…FKLV, ILPL…VIML, and FGPY…LLWG.

Belongs to the peptidase A24 family. Requires Zn(2+) as cofactor.

The protein localises to the cell inner membrane. It catalyses the reaction Typically cleaves a -Gly-|-Phe- bond to release an N-terminal, basic peptide of 5-8 residues from type IV prepilin, and then N-methylates the new N-terminal amino group, the methyl donor being S-adenosyl-L-methionine.. Its function is as follows. Plays an essential role in type IV pili and type II pseudopili formation by proteolytically removing the leader sequence from substrate proteins and subsequently monomethylating the alpha-amino group of the newly exposed N-terminal phenylalanine. Substrates include proteins required for pilus biogenesis PilE, PilV, PilW, and PilX as well as some components of the type II general secretory apparatus GspG, GspH, GspI and GspJ. The sequence is that of Prepilin leader peptidase/N-methyltransferase (pilD) from Pseudomonas aeruginosa (strain ATCC 15692 / DSM 22644 / CIP 104116 / JCM 14847 / LMG 12228 / 1C / PRS 101 / PAO1).